The chain runs to 273 residues: Large ribosomal subunit protein uL2cz/uL2cy (273 aa).

Disordered stretches follow at residues 1–25 and 225–253; these read MAKH…VKSN and PVDH…YPAL.

The protein belongs to the universal ribosomal protein uL2 family. Part of the 50S ribosomal subunit.

The protein resides in the plastid. It is found in the chloroplast. This Triticum aestivum (Wheat) protein is Large ribosomal subunit protein uL2cz/uL2cy (rpl2-A).